We begin with the raw amino-acid sequence, 181 residues long: MGYPGKNHKQYQTPKRPFELSRIEEETRLVIEYGLRNKREVWIAKGALRKYRKAAREIIALQSTGSEQARVERKKDELIGSLQRSGMLSENADIDDVLALKVEQQLDRRLQTQVYRRGFARSPKQARQFITHGHIAIGGRRVTIPGYTVSAKEQEEISYAGSSPLVSDIHSERQRIAKVGR.

The 65-residue stretch at 108-172 folds into the S4 RNA-binding domain; the sequence is RRLQTQVYRR…SPLVSDIHSE (65 aa).

The protein belongs to the universal ribosomal protein uS4 family. In terms of assembly, part of the 30S ribosomal subunit. Contacts protein S5. The interaction surface between S4 and S5 is involved in control of translational fidelity.

Its function is as follows. One of the primary rRNA binding proteins, it binds directly to 16S rRNA where it nucleates assembly of the body of the 30S subunit. In terms of biological role, with S5 and S12 plays an important role in translational accuracy. This Methanospirillum hungatei JF-1 (strain ATCC 27890 / DSM 864 / NBRC 100397 / JF-1) protein is Small ribosomal subunit protein uS4.